Consider the following 141-residue polypeptide: LOB domain-containing protein 34 (141 aa).

The LOB domain maps to Asn-16 to Ile-119.

The protein belongs to the LOB domain-containing protein family.

The protein is LOB domain-containing protein 34 (LBD34) of Arabidopsis thaliana (Mouse-ear cress).